Reading from the N-terminus, the 564-residue chain is Beta-catenin-like protein 1 homolog (564 aa).

Residues 1–56 are disordered; it reads MDVDSIFKNTEETNKKRNPEEADSLEPASSRRRLAEENSDEENEEFDEEGGRFFGS. Positions 9–20 are enriched in basic and acidic residues; it reads NTEETNKKRNPE. A compositionally biased stretch (acidic residues) spans 37-48; that stretch reads ENSDEENEEFDE. Residue S39 is modified to Phosphoserine. HEAT repeat units follow at residues 83–133 and 138–177; these read PTEL…VLSE and IPIFLKLDCVSTFLELMNHENADITITVLELLIELTDEDV. ARM repeat units lie at residues 179 to 229, 230 to 276, 277 to 326, 328 to 366, and 367 to 411; these read PDAL…LLSV, DNSI…LANS, KEAK…LVQE, KGKSLFLKEEGIELCILNMKHKGKSRYSTIKVLDYLLFG, and PLST…LFRS. A coiled-coil region spans residues 465 to 528; that stretch reads EKSTKWFLQQ…DALKNYHENL (64 aa).

Its subcellular location is the nucleus. Functionally, probable spliceosomal component involved in the activation of pre-mRNA splicing. This chain is Beta-catenin-like protein 1 homolog (ctnnbl1), found in Schizosaccharomyces pombe (strain 972 / ATCC 24843) (Fission yeast).